The chain runs to 822 residues: Putative pentatricopeptide repeat-containing protein At5g13230, mitochondrial (822 aa).

A mitochondrion-targeting transit peptide spans 1–70; sequence MIVFMRIIHV…QKNDPISAKA (70 aa). PPR repeat units follow at residues 48 to 82, 83 to 117, 145 to 179, 180 to 210, 211 to 245, 246 to 280, 281 to 311, 312 to 346, 347 to 381, 382 to 416, 417 to 447, 448 to 482, 483 to 513, 514 to 548, 549 to 584, and 585 to 619; these read DSHAYGAMLRRCIQKNDPISAKAIHCDILKKGSCL, DLFATNILLNAYVKAGFDKDALNLFDEMPERNNVS, NPHVFTSFLKLFVSLDKAEICPWLHSPIVKLGYDS, NAFVGAALINAYSVCGSVDSARTVFEGILCK, DIVVWAGIVSCYVENGYFEDSLKLLSCMRMAGFMP, NNYTFDTALKASIGLGAFDFAKGVHGQILKTCYVL, DPRVGVGLLQLYTQLGDMSDAFKVFNEMPKN, DVVPWSFMIARFCQNGFCNEAVDLFIRMREAFVVP, NEFTLSSILNGCAIGKCSGLGEQLHGLVVKVGFDL, DIYVSNALIDVYAKCEKMDTAVKLFAELSSKNEVS, WNTVIVGYENLGEGGKAFSMFREALRNQVSV, TEVTFSSALGACASLASMDLGVQVHGLAIKTNNAK, KVAVSNSLIDMYAKCGDIKFAQSVFNEMETI, DVASWNALISGYSTHGLGRQALRILDIMKDRDCKP, NGLTFLGVLSGCSNAGLIDQGQECFESMIRDHGIEP, and CLEHYTCMVRLLGRSGQLDKAMKLIEGIPYEPSVM. Residues 620–695 are type E motif; it reads IWRAMLSASM…EPGLSWIEHQ (76 aa). Residues 696–726 form a type E(+) motif region; the sequence is GDVHYFSVGLSDHPDMKLINGMLEWLNMKAT. Positions 727-822 are type DYW motif; it reads RAGYVPDRNA…AGVCSCGDHW (96 aa).

Belongs to the PPR family. PCMP-H subfamily.

It localises to the mitochondrion. The sequence is that of Putative pentatricopeptide repeat-containing protein At5g13230, mitochondrial (PCMP-H89) from Arabidopsis thaliana (Mouse-ear cress).